The chain runs to 203 residues: NADH dehydrogenase [ubiquinone] 1 alpha subcomplex assembly factor 4 (203 aa).

It belongs to the NDUFAF4 family. Together with NdufAF3 associates with mitochondrial complex I assembly intermediates during its biogenesis.

Functionally, involved in the assembly of mitochondrial NADH:ubiquinone oxidoreductase complex (complex I). Together with NdufAF3, involved in biogenesis of complex 1 modules N, Q and P-peripheral, but not the P-distal module. Required for recruitment of the complex I assembly factor Timmdc1 to complex 1 assembly intermediates. In Drosophila melanogaster (Fruit fly), this protein is NADH dehydrogenase [ubiquinone] 1 alpha subcomplex assembly factor 4.